Consider the following 389-residue polypeptide: Phospho-N-acetylmuramoyl-pentapeptide-transferase (389 aa).

A run of 10 helical transmembrane segments spans residues 21-41 (FITFRAVFATLTALVIGLVTG), 70-90 (GTPTMGGVLILVSIGISTLLW), 97-117 (FIWVVLIVTLGFGAVGWVDDY), 134-154 (YMWQSIIGLFAAIYLAFSVSA), 189-209 (TISYPLGVWGFIALTYFVIVG), 222-242 (GLAIMPTVMVGTALGLFAYLT), 259-279 (AGELIIFCGAMAGAGLAFLWF), 286-306 (VFMGDVGALALGGALGTIAVI), 311-331 (VVLFIMGGIFVVETLSVMLQV), and 366-386 (QVVVRFWIITMMLVLFGLSTL).

This sequence belongs to the glycosyltransferase 4 family. MraY subfamily. It depends on Mg(2+) as a cofactor.

It is found in the cell inner membrane. The catalysed reaction is UDP-N-acetyl-alpha-D-muramoyl-L-alanyl-gamma-D-glutamyl-meso-2,6-diaminopimeloyl-D-alanyl-D-alanine + di-trans,octa-cis-undecaprenyl phosphate = di-trans,octa-cis-undecaprenyl diphospho-N-acetyl-alpha-D-muramoyl-L-alanyl-D-glutamyl-meso-2,6-diaminopimeloyl-D-alanyl-D-alanine + UMP. It functions in the pathway cell wall biogenesis; peptidoglycan biosynthesis. In terms of biological role, catalyzes the initial step of the lipid cycle reactions in the biosynthesis of the cell wall peptidoglycan: transfers peptidoglycan precursor phospho-MurNAc-pentapeptide from UDP-MurNAc-pentapeptide onto the lipid carrier undecaprenyl phosphate, yielding undecaprenyl-pyrophosphoryl-MurNAc-pentapeptide, known as lipid I. The protein is Phospho-N-acetylmuramoyl-pentapeptide-transferase of Janthinobacterium sp. (strain Marseille) (Minibacterium massiliensis).